Consider the following 465-residue polypeptide: Putative F-box/FBD/LRR-repeat protein At1g22000 (465 aa).

One can recognise an F-box domain in the interval 28–74 (ETRICALPDDLLLQILPHVPTKEAVATSILSKQWRYVWLMLPKLEFK). LRR repeat units lie at residues 154 to 181 (CLTLSNQILVDVSSPASLPSLLDLSLHY), 182 to 207 (VVYKDDGSLVRLLSSSPVLKRLSVHS), 210 to 230 (DDNLKTFTVKVSSLESLNYDE), 248 to 273 (NEVEVDDLNGSLVIDSPALKELHLSE), and 339 to 365 (ISLVDWLMPLMFLLQNSPKLKTPTIDN). Residues 373–424 (SWNQPSSIPGCLLSHLETFRWRGYGGREDAKKLLMTYILANSKCLKTVEISL) enclose the FBD domain.

The sequence is that of Putative F-box/FBD/LRR-repeat protein At1g22000 from Arabidopsis thaliana (Mouse-ear cress).